Consider the following 732-residue polypeptide: MTTQIRSPQGLPYPIQIDKLIPSVGSYLHEGDRLLVYKFWYLVERASDTGDDDNEHDVSPGGSAGSNGVSPPTKQLRESIEFFESPYEGDLISWNVDVGDEVATANQVICEIKRPCNHDIVYGGLCTQCGKEVSADAFDGVPLDVVGDVDLQISETEAIRTGKALKEHLRRDKKLILVVDLDQTIIHCGVDPTIAEWKNDPNNPNFETLRDVKSFTLDEELVLPLMYMNDDGSMLRPPPVRKCWYYVKVRPGLKEFFAKVAPLFEMHIYTMATRAYALQIAKIVDPTGELFGDRILSRDENGSLTTKSLAKLFPTDQSMVVVIDDRGDVWNWCPNLIKVVPYNFFVGVGDINSNFLPKQSTGMLQLGRKTRQKSQESQELLTDIMDNEKKLQEKIDKEVKRQEEKLNHQLATAEEPPANESKEELTKKLEYSASLEVQQQNRPLAKLQKHLHDQKLLVDDDDELYYLMGTLSNIHKTYYDMLSQQNEPEPNLMEIIPSLKQKVFQNCYFVFSGLIPLGTDIQRSDIVIWTSTFGATSTPDIDYLTTHLITKNPSTYKARLAKKFNPQIKIVHPDWIFECLVNWKKVDEKPYTLIVDSPISDEELQNFQTQLQKRQEYLEETQEQQHMLTSQENLNLFAAGTSWLNNDDDEDIPDTASDDDEDDDHDDESDDENNSEGIDRKRSIEDNHDDTSQKKTKAEPSQDGPVQHKGEGDDNEDSDSQLEEELMDMLDD.

The disordered stretch occupies residues 50 to 73 (GDDDNEHDVSPGGSAGSNGVSPPT). Lysine 74 participates in a covalent cross-link: Glycyl lysine isopeptide (Lys-Gly) (interchain with G-Cter in ubiquitin). One can recognise an FCP1 homology domain in the interval 170 to 363 (RRDKKLILVV…NFLPKQSTGM (194 aa)). The BRCT domain occupies 499 to 593 (LKQKVFQNCY…KKVDEKPYTL (95 aa)). A disordered region spans residues 642–732 (SWLNNDDDED…EEELMDMLDD (91 aa)). Residues 646 to 674 (NDDDEDIPDTASDDDEDDDHDDESDDENN) are compositionally biased toward acidic residues. The span at 677 to 712 (GIDRKRSIEDNHDDTSQKKTKAEPSQDGPVQHKGEG) shows a compositional bias: basic and acidic residues. Serine 701, serine 718, and serine 720 each carry phosphoserine. The span at 713-732 (DDNEDSDSQLEEELMDMLDD) shows a compositional bias: acidic residues.

Its subcellular location is the nucleus. It catalyses the reaction O-phospho-L-seryl-[protein] + H2O = L-seryl-[protein] + phosphate. The catalysed reaction is O-phospho-L-threonyl-[protein] + H2O = L-threonyl-[protein] + phosphate. Its function is as follows. Processively dephosphorylates 'Ser-2' and 'Ser-5' of the heptad repeats YSPTSPS in the C-terminal domain of the largest RNA polymerase II subunit (RPB1). This promotes the activity of RNA polymerase II. This chain is RNA polymerase II subunit A C-terminal domain phosphatase (FCP1), found in Saccharomyces cerevisiae (strain ATCC 204508 / S288c) (Baker's yeast).